Here is a 204-residue protein sequence, read N- to C-terminus: V-set and transmembrane domain-containing protein 2-like protein (204 aa).

The N-terminal stretch at 1 to 24 is a signal peptide; it reads MGAPLAVALGALHYLALFLQLGGA. Positions 41-158 constitute an Ig-like domain; the sequence is ALFTETPHDM…DGKARHHKVK (118 aa). A disulfide bridge links Cys-62 with Cys-142. Residues 168–204 form a disordered region; sequence NSVLHLPEAPPAAPAPPPPKPGKELRKRSVDQEACSL. Residues 175-187 are compositionally biased toward pro residues; it reads EAPPAAPAPPPPK. The span at 188–198 shows a compositional bias: basic and acidic residues; sequence PGKELRKRSVD.

This Homo sapiens (Human) protein is V-set and transmembrane domain-containing protein 2-like protein (VSTM2L).